A 313-amino-acid chain; its full sequence is Aspartate carbamoyltransferase catalytic subunit (313 aa).

Carbamoyl phosphate-binding residues include Arg58 and Thr59. Residue Lys86 coordinates L-aspartate. Positions 108, 136, and 139 each coordinate carbamoyl phosphate. L-aspartate-binding residues include Arg169 and Arg223. Residues Gly264 and Pro265 each contribute to the carbamoyl phosphate site.

This sequence belongs to the aspartate/ornithine carbamoyltransferase superfamily. ATCase family. Heterododecamer (2C3:3R2) of six catalytic PyrB chains organized as two trimers (C3), and six regulatory PyrI chains organized as three dimers (R2).

The catalysed reaction is carbamoyl phosphate + L-aspartate = N-carbamoyl-L-aspartate + phosphate + H(+). It participates in pyrimidine metabolism; UMP biosynthesis via de novo pathway; (S)-dihydroorotate from bicarbonate: step 2/3. Its function is as follows. Catalyzes the condensation of carbamoyl phosphate and aspartate to form carbamoyl aspartate and inorganic phosphate, the committed step in the de novo pyrimidine nucleotide biosynthesis pathway. This chain is Aspartate carbamoyltransferase catalytic subunit, found in Chlorobium luteolum (strain DSM 273 / BCRC 81028 / 2530) (Pelodictyon luteolum).